The sequence spans 67 residues: Small ribosomal subunit protein eS17 (67 aa).

Belongs to the eukaryotic ribosomal protein eS17 family.

The chain is Small ribosomal subunit protein eS17 from Korarchaeum cryptofilum (strain OPF8).